Consider the following 242-residue polypeptide: MTEVVPSSALSEVSLRLLCHDDIDTVKHLCGDWFPIEYPDSWYRDITSNKKFFSLAATYRGAIVGMIVAEIKNRTKIHKEDGDILASSFSVDTQVAYILSLGVVKEFRKHGIGSLLLESLKDHISTTAQDHCKAIYLHVLTTNNTAINFYENRDFRQHHYLPYYYSIRGVLKDGFTYVLYINGGHPPWTILDYIQHLGSALANLSPCSIPHRIYRQAHSLLCSFLPWSSISTKGGIEYSRTM.

Residues 1-192 are Cytoplasmic-facing; that stretch reads MTEVVPSSAL…GGHPPWTILD (192 aa). The N-acetyltransferase domain maps to 13 to 182; the sequence is VSLRLLCHDD…DGFTYVLYIN (170 aa). Tyrosine 38 is a substrate binding site. Position 79 is an N6-acetyllysine; by autocatalysis (lysine 79). Tyrosine 97 is an active-site residue. Residue leucine 99 participates in substrate binding. Residue 101–103 coordinates acetyl-CoA; the sequence is LGV. Lysine 105, lysine 109, and lysine 121 each carry N6-acetyllysine; by autocatalysis. 109–114 serves as a coordination point for acetyl-CoA; that stretch reads KHGIGS. Histidine 138 is a catalytic residue. Residues asparagine 143 and 150–153 contribute to the acetyl-CoA site; that span reads YENR. The interval 162–173 is required for homodimerization; the sequence is PYYYSIRGVLKD. Residue tyrosine 165 participates in substrate binding. Residues 193–236 constitute an intramembrane region (helical); that stretch reads YIQHLGSALANLSPCSIPHRIYRQAHSLLCSFLPWSSISTKGGI. The Cytoplasmic portion of the chain corresponds to 237-242; the sequence is EYSRTM.

Belongs to the acetyltransferase family. NAA60 subfamily. In terms of assembly, monomer and homodimer; monomer in presence of substrate and homodimer in its absence. Post-translationally, acetylated: autoacetylation is required for optimal acetyltransferase activity.

It is found in the golgi apparatus membrane. The enzyme catalyses N-terminal L-methionyl-[transmembrane protein] + acetyl-CoA = N-terminal N(alpha)-acetyl-L-methionyl-[transmembrane protein] + CoA + H(+). It carries out the reaction L-lysyl-[protein] + acetyl-CoA = N(6)-acetyl-L-lysyl-[protein] + CoA + H(+). Functionally, N-alpha-acetyltransferase that specifically mediates the acetylation of N-terminal residues of the transmembrane proteins, with a strong preference for N-termini facing the cytosol. Displays N-terminal acetyltransferase activity towards a range of N-terminal sequences including those starting with Met-Lys, Met-Val, Met-Ala and Met-Met. Required for normal chromosomal segregation during anaphase. May also show histone acetyltransferase activity; such results are however unclear in vivo and would require additional experimental evidences. This Mus musculus (Mouse) protein is N-alpha-acetyltransferase 60 (Naa60).